The primary structure comprises 316 residues: Transaldolase (316 aa).

The Schiff-base intermediate with substrate role is filled by Lys131.

This sequence belongs to the transaldolase family. Type 1 subfamily. As to quaternary structure, homodimer.

It localises to the cytoplasm. The catalysed reaction is D-sedoheptulose 7-phosphate + D-glyceraldehyde 3-phosphate = D-erythrose 4-phosphate + beta-D-fructose 6-phosphate. Its pathway is carbohydrate degradation; pentose phosphate pathway; D-glyceraldehyde 3-phosphate and beta-D-fructose 6-phosphate from D-ribose 5-phosphate and D-xylulose 5-phosphate (non-oxidative stage): step 2/3. Its function is as follows. Transaldolase is important for the balance of metabolites in the pentose-phosphate pathway. The protein is Transaldolase of Glaesserella parasuis serovar 5 (strain SH0165) (Haemophilus parasuis).